Reading from the N-terminus, the 437-residue chain is Trigger factor (437 aa).

In terms of domain architecture, PPIase FKBP-type spans Asp-161–Pro-246.

It belongs to the FKBP-type PPIase family. Tig subfamily.

The protein resides in the cytoplasm. It catalyses the reaction [protein]-peptidylproline (omega=180) = [protein]-peptidylproline (omega=0). Involved in protein export. Acts as a chaperone by maintaining the newly synthesized protein in an open conformation. Functions as a peptidyl-prolyl cis-trans isomerase. The protein is Trigger factor of Pseudomonas putida (strain ATCC 700007 / DSM 6899 / JCM 31910 / BCRC 17059 / LMG 24140 / F1).